A 787-amino-acid polypeptide reads, in one-letter code: Dolichyl-diphosphooligosaccharide--protein glycosyltransferase subunit STT3A (787 aa).

Residues 1-18 (MAEPESSTAAAGGSRLRN) lie on the Cytoplasmic side of the membrane. The chain crosses the membrane as a helical span at residues 19 to 39 (ACGGVLCAFTLLLIGVLAFSI). The Lumenal portion of the chain corresponds to 40 to 125 (RLFSVIKYES…LSVETVCVFT (86 aa)). The DXD motif 1 motif lies at 53-55 (EFD). Asp55 is a Mn(2+) binding site. Residues 126-144 (APIFSANASWATYLLTKEA) traverse the membrane as a helical segment. Residues 145–146 (KG) are Cytoplasmic-facing. Residues 147 to 164 (TGAGLMAAAILAMVPSYI) traverse the membrane as a helical segment. Residues 165–175 (SRSVAGSYDNE) are Lumenal-facing. 2 residues coordinate Mn(2+): Asp173 and Glu175. The DXD motif 2 motif lies at 173–175 (DNE). Residues 176–195 (AVAIFALIFTFYLYVKTLNT) traverse the membrane as a helical segment. At 196–197 (GS) the chain is on the cytoplasmic side. The chain crosses the membrane as a helical span at residues 198–212 (LFYATLNALSYFYMV). At 213–217 (CSWGG) the chain is on the lumenal side. The chain crosses the membrane as a helical span at residues 218-234 (YTFIINLIPIHVLLCIV). The Cytoplasmic segment spans residues 235–239 (TGRYS). A helical membrane pass occupies residues 240-265 (SRLYIAYAPLVILGTLLAALVPVVGF). Residues 266–273 (NAVMTSEH) are Lumenal-facing. A helical membrane pass occupies residues 274-293 (FASFLVFIILHVVALVYYIK). The Cytoplasmic segment spans residues 294 to 306 (GLLTPRLFKVAMT). Residues 307–327 (LVITVGLAVCFAVIAILIALV) form a helical membrane-spanning segment. The Lumenal segment spans residues 328–365 (ASSPTKGWSGRSLSLLDPTYASKYIPIIASVSEHQPPT). An SVSE motif motif is present at residues 357 to 360 (SVSE). The helical transmembrane segment at 366–388 (WPSYFMDINVLAFLIPAGIISCF) threads the bilayer. Topologically, residues 389–394 (LPLSDA) are cytoplasmic. Residues 395-411 (SSFVVLYLVTAVYFSGV) traverse the membrane as a helical segment. Topologically, residues 412-415 (MVRL) are lumenal. Dolichyl diphosphooligosaccharide is bound at residue Arg414. The helical transmembrane segment at 416 to 437 (MLVLAPAACILSGIALSEAFDV) threads the bilayer. Residues 438-525 (LTRSVKYQLS…KLLVLPMEAS (88 aa)) lie on the Cytoplasmic side of the membrane. Over residues 453–475 (SPAASGDSSAESSSASTVSTNSA) the composition is skewed to low complexity. The segment at 453–507 (SPAASGDSSAESSSASTVSTNSAKNETRPEKTETAPKEKPSKKNRKKEKEVAESV) is disordered. A compositionally biased stretch (basic and acidic residues) spans 477-504 (NETRPEKTETAPKEKPSKKNRKKEKEVA). Residues 526–546 (VLGILLLIVLGGFYVVHCVWA) form a helical membrane-spanning segment. The Lumenal portion of the chain corresponds to 547–787 (AAEAYSAPSI…AAGRKKNPWQ (241 aa)). Positions 592-594 (WWD) are interacts with target acceptor peptide in protein substrate. A WWDYG motif motif is present at residues 592-596 (WWDYG). Tyr597 provides a ligand contact to dolichyl diphosphooligosaccharide. Residues Asn604 and Asn611 are each glycosylated (N-linked (GlcNAc...) asparagine). N-linked (GlcNAc...) (high mannose) asparagine glycosylation is present at Asn615. The short motif at 659–666 (DINKFLWM) is the DK motif element. Residues 759 to 769 (RVRGKLKKLKS) show a composition bias toward basic residues. Positions 759–787 (RVRGKLKKLKSGSKASSTNAAGRKKNPWQ) are disordered.

This sequence belongs to the STT3 family. As to quaternary structure, component of the oligosaccharyltransferase (OST) complex. Requires Mg(2+) as cofactor. Mn(2+) serves as cofactor.

It localises to the endoplasmic reticulum membrane. It catalyses the reaction a di-trans,poly-cis-dolichyl diphosphooligosaccharide + L-asparaginyl-[protein] = N(4)-(oligosaccharide-(1-&gt;4)-N-acetyl-beta-D-glucosaminyl-(1-&gt;4)-N-acetyl-beta-D-glucosaminyl)-L-asparaginyl-[protein] + a di-trans,poly-cis-dolichyl diphosphate + H(+). It functions in the pathway protein modification; protein glycosylation. Catalytic subunit of the oligosaccharyl transferase (OST) complex that catalyzes the initial transfer of a defined glycan (Glc(3)Man(9)GlcNAc(2) in eukaryotes) from the lipid carrier dolichol-pyrophosphate to an asparagine residue within an Asn-X-Ser/Thr consensus motif in nascent polypeptide chains, the first step in protein N-glycosylation. N-glycosylation occurs cotranslationally and the complex associates with the Sec61 complex at the channel-forming translocon complex that mediates protein translocation across the endoplasmic reticulum (ER). All subunits are required for a maximal enzyme activity. This subunit contains the active site and the acceptor peptide and donor lipid-linked oligosaccharide (LLO) binding pockets. This is Dolichyl-diphosphooligosaccharide--protein glycosyltransferase subunit STT3A (STT3A) from Oryza sativa subsp. japonica (Rice).